Reading from the N-terminus, the 241-residue chain is Phosphoribosylaminoimidazole-succinocarboxamide synthase (241 aa).

It belongs to the SAICAR synthetase family.

It catalyses the reaction 5-amino-1-(5-phospho-D-ribosyl)imidazole-4-carboxylate + L-aspartate + ATP = (2S)-2-[5-amino-1-(5-phospho-beta-D-ribosyl)imidazole-4-carboxamido]succinate + ADP + phosphate + 2 H(+). It participates in purine metabolism; IMP biosynthesis via de novo pathway; 5-amino-1-(5-phospho-D-ribosyl)imidazole-4-carboxamide from 5-amino-1-(5-phospho-D-ribosyl)imidazole-4-carboxylate: step 1/2. The chain is Phosphoribosylaminoimidazole-succinocarboxamide synthase from Caldivirga maquilingensis (strain ATCC 700844 / DSM 13496 / JCM 10307 / IC-167).